The sequence spans 474 residues: Pyoverdine export outer membrane protein OpmQ (474 aa).

An N-terminal signal peptide occupies residues 1 to 17 (MSMKNLSLISACLLLGA). Cysteine 18 carries the N-palmitoyl cysteine lipid modification. The S-diacylglycerol cysteine moiety is linked to residue cysteine 18.

Belongs to the outer membrane factor (OMF) (TC 1.B.17) family. As to quaternary structure, part of the tripartite efflux system PvdRT-OpmQ, which is composed of an inner membrane component with both ATPase and permease domains, PvdT, a periplasmic membrane fusion protein, PvdR, and an outer membrane component, OpmQ.

It localises to the cell outer membrane. Its function is as follows. Part of the tripartite efflux system PvdRT-OpmQ required for the secretion into the extracellular milieu of the siderophore pyoverdine (PVD), which is involved in iron acquisition. The system is responsible for export of newly synthesized PVD after the final steps of biosynthesis have taken place in the periplasm. It is also responsible for recycling of PVD after internalization of ferri-PVD into the periplasm by the outer-membrane receptor FpvA and release of iron from PVD, thus making PVD available for new cycles of iron uptake. In addition, can expel unwanted metals complexed with PVD from the periplasm into the extracellular medium. The polypeptide is Pyoverdine export outer membrane protein OpmQ (Pseudomonas aeruginosa (strain ATCC 15692 / DSM 22644 / CIP 104116 / JCM 14847 / LMG 12228 / 1C / PRS 101 / PAO1)).